The chain runs to 473 residues: Maltose fermentation regulatory protein MAL63 (473 aa).

Positions 8–34 form a DNA-binding region, zn(2)-C6 fungal-type; sequence CDCCRVRRVKCDRNKPCNRCIQRNLNC. Residues 41–49 carry the Nuclear localization signal motif; that stretch reads KKRGPKSIR.

This sequence belongs to the MAL13 family.

It is found in the nucleus. Functionally, regulates the coordinate transcription of structural MAL6S (maltase) and MAL6T (maltose permease) genes. This chain is Maltose fermentation regulatory protein MAL63 (MAL63), found in Saccharomyces cerevisiae (Baker's yeast).